We begin with the raw amino-acid sequence, 419 residues long: MSEEFKSLLSSDIIPENWYNVTPDLPEPLPPPRDTKSDFSSINLLNKILPKEVLKQEFTFKRYEKIPDEIIDKYIQIGRPTPLIRAKNLEKYLDYGGKIFFKFEGATATGSHKINTAIAQAYYAMNENANGVTTETGAGQWGSATALAASLYNLKSQIFMVRVSYEQKPLRKVVMSLYNSSVVPSPSNLTEFGRKILSENPDHPGTLGIGISEAVEYALDHNYRYMVASVMNAALTHQSVIGQESIKQMELLGEFPDVLFGCVGGGSNFGGFAFPFLPINDDIEIYATTAQEVPKFSQGEYKYDLMDTAGVLPAVRMYSLGADFVPPKIYAGGLRYHGAAPSLSLLINHGRIKSDEVTEEQVKNAIKTFANTQGFIIAPESGHAVATAIKYAREHKDEKKTLLINVSGHGLLDLSIFSD.

An N6-(pyridoxal phosphate)lysine modification is found at Lys-113.

It belongs to the TrpB family. As to quaternary structure, tetramer of two alpha and two beta chains. Requires pyridoxal 5'-phosphate as cofactor.

The enzyme catalyses (1S,2R)-1-C-(indol-3-yl)glycerol 3-phosphate + L-serine = D-glyceraldehyde 3-phosphate + L-tryptophan + H2O. The protein operates within amino-acid biosynthesis; L-tryptophan biosynthesis; L-tryptophan from chorismate: step 5/5. In terms of biological role, the beta subunit is responsible for the synthesis of L-tryptophan from indole and L-serine. This Picrophilus torridus (strain ATCC 700027 / DSM 9790 / JCM 10055 / NBRC 100828 / KAW 2/3) protein is Tryptophan synthase beta chain.